Here is a 120-residue protein sequence, read N- to C-terminus: Nitrogen regulatory protein GlnK1 (120 aa).

ADP contacts are provided by residues Thr-40, 48 to 50, Val-75, and 98 to 101; these read GEQ and GDGR. Residues Thr-40, 48–50, Val-75, and 98–101 contribute to the ATP site; these read GEQ and GDGR.

It belongs to the P(II) protein family. Homotrimer. Interacts and forms a complex with Amt1.

The protein localises to the cytoplasm. Its function is as follows. Involved in the regulation of nitrogen metabolism. Regulates the activity of its targets by protein-protein interaction in response to the nitrogen status of the cell. Regulates the activity of the ammonia channel Amt1 via direct interaction. This Archaeoglobus fulgidus (strain ATCC 49558 / DSM 4304 / JCM 9628 / NBRC 100126 / VC-16) protein is Nitrogen regulatory protein GlnK1.